The primary structure comprises 149 residues: Large ribosomal subunit protein uL15 (149 aa).

A disordered region spans residues 1-57; sequence MRLNDPKPKTGSQHRRRRVGRGIAAGQGASCGFGMRGQKSRSGRPTRPGFEGGQNPL. Over residues 23 to 35 the composition is skewed to gly residues; the sequence is IAAGQGASCGFGM.

Belongs to the universal ribosomal protein uL15 family. In terms of assembly, part of the 50S ribosomal subunit.

In terms of biological role, binds to the 23S rRNA. The sequence is that of Large ribosomal subunit protein uL15 from Acaryochloris marina (strain MBIC 11017).